The primary structure comprises 444 residues: Probable polygalacturonase At1g80170 (444 aa).

The N-terminal stretch at 1–28 is a signal peptide; it reads MSYSRGGTLVTLLLLLVVASSLALTANA. PbH1 repeat units follow at residues 208-234, 235-256, 258-278, 288-309, 317-338, and 351-378; these read CRRV…HISV, SRGI…SIVK, STQI…SIGS, VRDI…RIKT, VSKI…IIDQ, and TSAI…KISC. Asp-249 acts as the Proton donor in catalysis. His-272 is a catalytic residue.

The protein belongs to the glycosyl hydrolase 28 family. In terms of tissue distribution, expressed in young, mature and dehiscing anthers. Found in stems, but not in roots or in abscission zone of floral organs.

The protein localises to the secreted. Its subcellular location is the cell wall. The catalysed reaction is (1,4-alpha-D-galacturonosyl)n+m + H2O = (1,4-alpha-D-galacturonosyl)n + (1,4-alpha-D-galacturonosyl)m.. The polypeptide is Probable polygalacturonase At1g80170 (Arabidopsis thaliana (Mouse-ear cress)).